A 298-amino-acid polypeptide reads, in one-letter code: 33 kDa chaperonin (298 aa).

2 disulfide bridges follow: C237-C239 and C270-C273.

This sequence belongs to the HSP33 family. Post-translationally, under oxidizing conditions two disulfide bonds are formed involving the reactive cysteines. Under reducing conditions zinc is bound to the reactive cysteines and the protein is inactive.

It localises to the cytoplasm. In terms of biological role, redox regulated molecular chaperone. Protects both thermally unfolding and oxidatively damaged proteins from irreversible aggregation. Plays an important role in the bacterial defense system toward oxidative stress. This chain is 33 kDa chaperonin, found in Enterococcus faecalis (strain ATCC 700802 / V583).